We begin with the raw amino-acid sequence, 461 residues long: UDP-glucose 6-dehydrogenase TuaD (461 aa).

Residues 3–20, Val12, Asp31, Lys36, Thr122, and Glu156 each bind NAD(+); that span reads KIAV…GTCF. Substrate contacts are provided by residues 152–156, Lys205, Asn209, 250–254, and Gly258; these read EFLRE and FLKAG. Cys261 serves as the catalytic Nucleophile. Lys264 contacts NAD(+). Lys321 lines the substrate pocket. Arg328 is a binding site for NAD(+).

Belongs to the UDP-glucose/GDP-mannose dehydrogenase family. Phosphorylated by YwqD and dephosphorylated by YwqE in vitro.

The protein resides in the cytoplasm. It carries out the reaction UDP-alpha-D-glucose + 2 NAD(+) + H2O = UDP-alpha-D-glucuronate + 2 NADH + 3 H(+). The protein operates within nucleotide-sugar biosynthesis; UDP-alpha-D-glucuronate biosynthesis; UDP-alpha-D-glucuronate from UDP-alpha-D-glucose: step 1/1. Its activity is regulated as follows. Activated by phosphorylation; inhibited by dephosphorylation. In terms of biological role, catalyzes the conversion of UDP-glucose into UDP-glucuronate, one of the precursors of teichuronic acid. The chain is UDP-glucose 6-dehydrogenase TuaD (tuaD) from Bacillus subtilis (strain 168).